Consider the following 167-residue polypeptide: Leptin (167 aa).

Positions 1 to 21 are cleaved as a signal peptide; it reads MLCGPLCRFLWLWPYLSYVEA. The cysteines at positions 117 and 167 are disulfide-linked.

The protein belongs to the leptin family.

The protein localises to the secreted. Its function is as follows. Key player in the regulation of energy balance and body weight control. Once released into the circulation, has central and peripheral effects by binding LEPR, found in many tissues, which results in the activation of several major signaling pathways. In the hypothalamus, acts as an appetite-regulating factor that induces a decrease in food intake and an increase in energy consumption by inducing anorexinogenic factors and suppressing orexigenic neuropeptides, also regulates bone mass and secretion of hypothalamo-pituitary-adrenal hormones. In the periphery, increases basal metabolism, influences reproductive function, regulates pancreatic beta-cell function and insulin secretion, is pro-angiogenic for endothelial cell and affects innate and adaptive immunity. In the arcuate nucleus of the hypothalamus, activates by depolarization POMC neurons inducing FOS and SOCS3 expression to release anorexigenic peptides and inhibits by hyperpolarization NPY neurons inducing SOCS3 with a consequent reduction on release of orexigenic peptides. In addition to its known satiety inducing effect, has a modulatory role in nutrient absorption. In the intestine, reduces glucose absorption by enterocytes by activating PKC and leading to a sequential activation of p38, PI3K and ERK signaling pathways which exerts an inhibitory effect on glucose absorption. Acts as a growth factor on certain tissues, through the activation of different signaling pathways increases expression of genes involved in cell cycle regulation such as CCND1, via JAK2-STAT3 pathway, or VEGFA, via MAPK1/3 and PI3K-AKT1 pathways. May also play an apoptotic role via JAK2-STAT3 pathway and up-regulation of BIRC5 expression. Pro-angiogenic, has mitogenic activity on vascular endothelial cells and plays a role in matrix remodeling by regulating the expression of matrix metalloproteinases (MMPs) and tissue inhibitors of metalloproteinases (TIMPs). In innate immunity, modulates the activity and function of neutrophils by increasing chemotaxis and the secretion of oxygen radicals. Increases phagocytosis by macrophages and enhances secretion of pro-inflammatory mediators. Increases cytotoxic ability of NK cells. Plays a pro-inflammatory role, in synergy with IL1B, by inducing NOS2 which promotes the production of IL6, IL8 and Prostaglandin E2, through a signaling pathway that involves JAK2, PI3K, MAP2K1/MEK1 and MAPK14/p38. In adaptive immunity, promotes the switch of memory T-cells towards T helper-1 cell immune responses. Increases CD4(+)CD25(-) T-cell proliferation and reduces autophagy during TCR (T-cell receptor) stimulation, through MTOR signaling pathway activation and BCL2 up-regulation. In Felis catus (Cat), this protein is Leptin (LEP).